The sequence spans 1267 residues: DNA-directed RNA polymerase subunit beta (1267 aa).

The protein belongs to the RNA polymerase beta chain family. The RNAP catalytic core consists of 2 alpha, 1 beta, 1 beta' and 1 omega subunit. When a sigma factor is associated with the core the holoenzyme is formed, which can initiate transcription.

The catalysed reaction is RNA(n) + a ribonucleoside 5'-triphosphate = RNA(n+1) + diphosphate. DNA-dependent RNA polymerase catalyzes the transcription of DNA into RNA using the four ribonucleoside triphosphates as substrates. The chain is DNA-directed RNA polymerase subunit beta (rpoB) from Carsonella ruddii (strain PV).